A 548-amino-acid polypeptide reads, in one-letter code: Membrane protein insertase YidC (548 aa).

A helical transmembrane segment spans residues 6–26; it reads NLLVIALLFVSFMIWQAWEQD. The interval 28 to 55 is disordered; it reads NPQPQAQQTTQTTTTAAGSAADQGVPAS. Low complexity predominate over residues 30 to 50; that stretch reads QPQAQQTTQTTTTAAGSAADQ. The next 4 helical transmembrane spans lie at 350 to 370, 420 to 440, 458 to 478, and 499 to 519; these read FVGN…GIMY, LGGC…YYML, LSAQ…MFFI, and PVIF…YYIV.

The protein belongs to the OXA1/ALB3/YidC family. Type 1 subfamily. As to quaternary structure, interacts with the Sec translocase complex via SecD. Specifically interacts with transmembrane segments of nascent integral membrane proteins during membrane integration.

The protein localises to the cell inner membrane. Its function is as follows. Required for the insertion and/or proper folding and/or complex formation of integral membrane proteins into the membrane. Involved in integration of membrane proteins that insert both dependently and independently of the Sec translocase complex, as well as at least some lipoproteins. Aids folding of multispanning membrane proteins. This chain is Membrane protein insertase YidC, found in Escherichia coli O127:H6 (strain E2348/69 / EPEC).